Here is a 173-residue protein sequence, read N- to C-terminus: Propanediol dehydratase small subunit (173 aa).

It belongs to the diol/glycerol dehydratase small subunit family. As to quaternary structure, the propanediol dehydratase enzyme is a heterotrimeric complex composed of a large (PduC), a medium (PduD) and a small (PduE) subunit. It depends on adenosylcob(III)alamin as a cofactor.

The protein localises to the bacterial microcompartment. It carries out the reaction propane-1,2-diol = propanal + H2O. The protein operates within polyol metabolism; 1,2-propanediol degradation. With respect to regulation, inhibited by glycerol. In terms of biological role, part of the PduCDE complex that catalyzes the dehydration of 1,2-propanediol (1,2-PD) to propionaldehyde. Required for S.typhimurium growth on 1,2-PD as the sole carbon and energy source. Localized in the bacterial microcompartment (BMC) dedicated to 1,2-PD degradation. The 1,2-PD-specific bacterial microcompartment (BMC) concentrates low levels of 1,2-PD catabolic enzymes, concentrates volatile reaction intermediates thus enhancing pathway flux and keeps the level of toxic, mutagenic propionaldehyde low. The polypeptide is Propanediol dehydratase small subunit (Salmonella typhimurium (strain LT2 / SGSC1412 / ATCC 700720)).